Here is a 171-residue protein sequence, read N- to C-terminus: NADH-quinone oxidoreductase subunit E (171 aa).

4 residues coordinate [2Fe-2S] cluster: C97, C102, C138, and C142.

It belongs to the complex I 24 kDa subunit family. Composed of 13 different subunits. Subunits NuoCD, E, F, and G constitute the peripheral sector of the complex. Requires [2Fe-2S] cluster as cofactor.

It carries out the reaction a quinone + NADH + 5 H(+)(in) = a quinol + NAD(+) + 4 H(+)(out). Functionally, NDH-1 shuttles electrons from NADH, via FMN and iron-sulfur (Fe-S) centers, to quinones in the respiratory chain. Couples the redox reaction to proton translocation (for every two electrons transferred, four hydrogen ions are translocated across the cytoplasmic membrane), and thus conserves the redox energy in a proton gradient. The polypeptide is NADH-quinone oxidoreductase subunit E (nuoE) (Buchnera aphidicola subsp. Baizongia pistaciae (strain Bp)).